The primary structure comprises 525 residues: MNDILKEIAKRRTFAIISHPDAGKTTITEKMLLFGNAIKTAGTVKAKKSGVHATSDWMEMEKERGISITTSVMQFPYNGKVVNLLDTPGHEDFSEDTYRTLTAVDSALMVVDAVKGVEDRTIKLMNVCRLRDTPIVTFMNKFDRDTRDPLELLDEVEDIMKIKCAPMNWPIGMGKFFKGVYDLYNDEVTLFEGGHGHEIHPYKKIKGLANAKDQIGADLFDDLEMEIDLVRGASHEFDQEAFLKGELTPVYFGTALANFGVKEMMDGFTTYAPEPQPRETNERLVNTDENKLTGFVFKIQANMDDKHRDRIAFFRICSGKYEKGMKIYHERTGKMMQVSKALTFMAGEREQVEEGYAGDIIGLHNHGSIQIGDSFTQGEKLKFKGIPNFAPEIFKRVKLNDPLKMKALQKGLVQLSEEGATQVFKPMISNDLVLGAVGVLQFDVVAQRLASEYNVKCSYEGVNVSLARWIFCDDEKKLNDFKKKYEVNLSYDGAGYLTYLAPTGVNLQLAQDKNPDIIFSATREH.

The region spanning 9–276 (AKRRTFAIIS…GFTTYAPEPQ (268 aa)) is the tr-type G domain. Residues 18–25 (SHPDAGKT), 86–90 (DTPGH), and 140–143 (NKFD) each bind GTP.

This sequence belongs to the TRAFAC class translation factor GTPase superfamily. Classic translation factor GTPase family. PrfC subfamily.

Its subcellular location is the cytoplasm. Its function is as follows. Increases the formation of ribosomal termination complexes and stimulates activities of RF-1 and RF-2. It binds guanine nucleotides and has strong preference for UGA stop codons. It may interact directly with the ribosome. The stimulation of RF-1 and RF-2 is significantly reduced by GTP and GDP, but not by GMP. This is Peptide chain release factor 3 from Francisella philomiragia subsp. philomiragia (strain ATCC 25017 / CCUG 19701 / FSC 153 / O#319-036).